The chain runs to 1342 residues: DNA-directed RNA polymerase subunit beta (1342 aa).

Belongs to the RNA polymerase beta chain family. The RNAP catalytic core consists of 2 alpha, 1 beta, 1 beta' and 1 omega subunit. When a sigma factor is associated with the core the holoenzyme is formed, which can initiate transcription.

It catalyses the reaction RNA(n) + a ribonucleoside 5'-triphosphate = RNA(n+1) + diphosphate. DNA-dependent RNA polymerase catalyzes the transcription of DNA into RNA using the four ribonucleoside triphosphates as substrates. The sequence is that of DNA-directed RNA polymerase subunit beta from Aliivibrio fischeri (strain MJ11) (Vibrio fischeri).